Reading from the N-terminus, the 436-residue chain is 3-phosphoshikimate 1-carboxyvinyltransferase (436 aa).

Residues Lys-23, Ser-24, and Arg-28 each coordinate 3-phosphoshikimate. Residue Lys-23 participates in phosphoenolpyruvate binding. Phosphoenolpyruvate-binding residues include Gly-97 and Arg-126. Residues Ser-171, Gln-173, Asp-323, and Lys-350 each coordinate 3-phosphoshikimate. Residue Gln-173 participates in phosphoenolpyruvate binding. Residue Asp-323 is the Proton acceptor of the active site. The phosphoenolpyruvate site is built by Arg-354 and Arg-396.

This sequence belongs to the EPSP synthase family. Monomer.

The protein resides in the cytoplasm. The catalysed reaction is 3-phosphoshikimate + phosphoenolpyruvate = 5-O-(1-carboxyvinyl)-3-phosphoshikimate + phosphate. It participates in metabolic intermediate biosynthesis; chorismate biosynthesis; chorismate from D-erythrose 4-phosphate and phosphoenolpyruvate: step 6/7. In terms of biological role, catalyzes the transfer of the enolpyruvyl moiety of phosphoenolpyruvate (PEP) to the 5-hydroxyl of shikimate-3-phosphate (S3P) to produce enolpyruvyl shikimate-3-phosphate and inorganic phosphate. This Prochlorococcus marinus (strain MIT 9301) protein is 3-phosphoshikimate 1-carboxyvinyltransferase.